Reading from the N-terminus, the 68-residue chain is Metallothionein (68 aa).

Cysteine 7, cysteine 9, cysteine 14, cysteine 16, cysteine 20, cysteine 22, cysteine 25, cysteine 27, cysteine 35, cysteine 39, cysteine 40, cysteine 42, cysteine 43, cysteine 47, cysteine 50, cysteine 54, cysteine 56, cysteine 64, cysteine 66, and cysteine 67 together coordinate a divalent metal cation.

This sequence belongs to the metallothionein superfamily. Type 1 family.

Functionally, metallothioneins have a high content of cysteine residues that bind various heavy metals. The protein is Metallothionein (mt) of Scyliorhinus torazame (Cloudy catshark).